The following is a 470-amino-acid chain: Myricetin 3-O-rhamnoside 1,2-glucosyltransferase UGT709G2 (470 aa).

Histidine 20 (proton acceptor) is an active-site residue. Histidine 20 provides a ligand contact to an anthocyanidin. Residue aspartate 117 is the Charge relay of the active site. 7 residues coordinate UDP-alpha-D-glucose: alanine 340, glutamine 342, histidine 357, tryptophan 360, asparagine 361, serine 362, and glutamate 365. Alanine 380 contributes to the an anthocyanidin binding site. Positions 381 and 382 each coordinate UDP-alpha-D-glucose.

This sequence belongs to the UDP-glycosyltransferase family. Expressed in young cromes.

The enzyme catalyses myricetin 3-O-alpha-L-rhamnoside + UDP-alpha-D-glucose = myricetin 3-O-[beta-D-glucosyl-(1-&gt;2)-alpha-L-rhamnoside] + UDP + H(+). It participates in flavonoid metabolism. Its function is as follows. Glucosyltransferase involved in montbretin A (MbA) biosynthesis. Catalyzes the glucosylation of myricetin 3-O-alpha-L-rhamnoside (MR) to produce myricetin 3-O-[beta-D-glucosyl-(1-&gt;2)-alpha-L-rhamnoside] (MRG), a precursor of MbA. MbA is a potent inhibitor of human pancreatic alpha-amylase and is being developed as drug candidate to treat type-2 diabetes. In vitro, is able to transfer UDP-xylose with 50-fold less efficiency compared with UDP-glucose. In vitro, can use myricetin 3-O-glucoside and quercetin 3-O-glucoside as substrates, although these two flavonoids may not be physiological substrates in vivo. This is Myricetin 3-O-rhamnoside 1,2-glucosyltransferase UGT709G2 from Crocosmia x crocosmiiflora (Montbretia).